Consider the following 352-residue polypeptide: Ion-translocating oxidoreductase complex subunit D (352 aa).

4 helical membrane passes run 20-40, 42-62, 69-91, and 123-143; these read IMLL…WFFG, GTLF…AIVL, VASH…SIPP, and PAMI…TSWL. FMN phosphoryl threonine is present on Thr-187. Transmembrane regions (helical) follow at residues 215–235, 242–262, 267–287, 301–321, and 322–342; these read LAGV…VFLL, WHIP…GWLF, LASP…FFIL, LIFG…GGYP, and DGVA…DYYT.

Belongs to the NqrB/RnfD family. As to quaternary structure, the complex is composed of six subunits: RsxA, RsxB, RsxC, RsxD, RsxE and RsxG. It depends on FMN as a cofactor.

The protein resides in the cell inner membrane. In terms of biological role, part of a membrane-bound complex that couples electron transfer with translocation of ions across the membrane. Required to maintain the reduced state of SoxR. This Salmonella enteritidis PT4 (strain P125109) protein is Ion-translocating oxidoreductase complex subunit D.